Here is a 520-residue protein sequence, read N- to C-terminus: ATP synthase subunit alpha (520 aa).

169–176 provides a ligand contact to ATP; it reads GDRKTGKT.

Belongs to the ATPase alpha/beta chains family. As to quaternary structure, F-type ATPases have 2 components, CF(1) - the catalytic core - and CF(0) - the membrane proton channel. CF(1) has five subunits: alpha(3), beta(3), gamma(1), delta(1), epsilon(1). CF(0) has three main subunits: a(1), b(2) and c(9-12). The alpha and beta chains form an alternating ring which encloses part of the gamma chain. CF(1) is attached to CF(0) by a central stalk formed by the gamma and epsilon chains, while a peripheral stalk is formed by the delta and b chains.

It localises to the cell membrane. The enzyme catalyses ATP + H2O + 4 H(+)(in) = ADP + phosphate + 5 H(+)(out). In terms of biological role, produces ATP from ADP in the presence of a proton gradient across the membrane. The alpha chain is a regulatory subunit. The protein is ATP synthase subunit alpha of Oenococcus oeni (strain ATCC BAA-331 / PSU-1).